The primary structure comprises 286 residues: uncharacterized protein (286 aa).

The next 6 membrane-spanning stretches (helical) occupy residues 52 to 74, 79 to 101, 142 to 161, 168 to 190, 203 to 225, and 257 to 276; these read ILWT…LIGL, LIAI…FLFL, WWDP…VSFF, VLVF…GAIL, IQAT…VALV, and IIWI…ASFM.

It localises to the cell membrane. This is an uncharacterized protein from Archaeoglobus fulgidus (strain ATCC 49558 / DSM 4304 / JCM 9628 / NBRC 100126 / VC-16).